The sequence spans 422 residues: Serine--tRNA ligase (422 aa).

229–231 (TAE) is a binding site for L-serine. 260–262 (RAE) lines the ATP pocket. Glu283 provides a ligand contact to L-serine. Position 347–350 (347–350 (EISS)) interacts with ATP. Ser383 is an L-serine binding site.

Belongs to the class-II aminoacyl-tRNA synthetase family. Type-1 seryl-tRNA synthetase subfamily. In terms of assembly, homodimer. The tRNA molecule binds across the dimer.

Its subcellular location is the cytoplasm. It catalyses the reaction tRNA(Ser) + L-serine + ATP = L-seryl-tRNA(Ser) + AMP + diphosphate + H(+). The enzyme catalyses tRNA(Sec) + L-serine + ATP = L-seryl-tRNA(Sec) + AMP + diphosphate + H(+). Its pathway is aminoacyl-tRNA biosynthesis; selenocysteinyl-tRNA(Sec) biosynthesis; L-seryl-tRNA(Sec) from L-serine and tRNA(Sec): step 1/1. Its function is as follows. Catalyzes the attachment of serine to tRNA(Ser). Is also able to aminoacylate tRNA(Sec) with serine, to form the misacylated tRNA L-seryl-tRNA(Sec), which will be further converted into selenocysteinyl-tRNA(Sec). The protein is Serine--tRNA ligase of Heliobacterium modesticaldum (strain ATCC 51547 / Ice1).